A 139-amino-acid chain; its full sequence is Mitochondrial intermembrane space import and assembly protein 40-A (139 aa).

Cystine bridges form between C53–C55, C64–C97, and C74–C87. The region spanning 61–105 (SGPCGEQFKSAFSCFHYSQEEIKGSDCLDQFRGMQECMQKYPDLY) is the CHCH domain. 2 short sequence motifs (cx9C motif) span residues 64-74 (CGEQFKSAFSC) and 87-97 (CLDQFRGMQEC). Positions 103–139 (DLYPQEDDEEEAEKEKQNKEAEPSVTQSSDTKEESSS) are disordered. Residues 115–124 (EKEKQNKEAE) are compositionally biased toward basic and acidic residues.

Monomer. Can form homooligomers.

It is found in the mitochondrion intermembrane space. Its function is as follows. Central component of a redox-sensitive mitochondrial intermembrane space import machinery which is required for the biogenesis of respiratory chain complexes. Functions as chaperone and catalyzes the formation of disulfide bonds in substrate proteins, such as COX17 or MICU1. Required for the import and folding of small cysteine-containing proteins (small Tim) in the mitochondrial intermembrane space (IMS). Precursor proteins to be imported into the IMS are translocated in their reduced form into the mitochondria. This Xenopus laevis (African clawed frog) protein is Mitochondrial intermembrane space import and assembly protein 40-A (chchd4-a).